A 447-amino-acid chain; its full sequence is Elongation factor 1-alpha (447 aa).

A tr-type G domain is found at 5 to 230 (KIHISIVVIG…DQINEPKRPS (226 aa)). Positions 14-21 (GHVDSGKS) are G1. 14–21 (GHVDSGKS) contributes to the GTP binding site. Lysine 55 is subject to N6,N6-dimethyllysine. Positions 70 to 74 (GITID) are G2. An N6,N6,N6-trimethyllysine modification is found at lysine 79. The segment at 91-94 (DAPG) is G3. GTP contacts are provided by residues 91–95 (DAPGH) and 153–156 (NKMD). The tract at residues 153–156 (NKMD) is G4. Lysine 187 is modified (N6,N6,N6-trimethyllysine). The interval 194–196 (SGF) is G5. Lysine 261 carries the post-translational modification N6-methyllysine. Position 289 is a 5-glutamyl glycerylphosphorylethanolamine (glutamate 289). Lysine 306 bears the N6,N6,N6-trimethyllysine mark. At glutamate 362 the chain carries 5-glutamyl glycerylphosphorylethanolamine. Lysine 396 carries the post-translational modification N6,N6,N6-trimethyllysine.

This sequence belongs to the TRAFAC class translation factor GTPase superfamily. Classic translation factor GTPase family. EF-Tu/EF-1A subfamily.

Its subcellular location is the cytoplasm. In terms of biological role, this protein promotes the GTP-dependent binding of aminoacyl-tRNA to the A-site of ribosomes during protein biosynthesis. The polypeptide is Elongation factor 1-alpha (Hordeum vulgare (Barley)).